The primary structure comprises 484 residues: Sucrose-6-phosphate hydrolase (484 aa).

Residues 48–51 (LLND), Gln67, 110–111 (YS), 168–169 (RD), and Glu223 each bind substrate. Asp51 is an active-site residue.

This sequence belongs to the glycosyl hydrolase 32 family.

It localises to the cytoplasm. The enzyme catalyses Hydrolysis of terminal non-reducing beta-D-fructofuranoside residues in beta-D-fructofuranosides.. Its pathway is glycan biosynthesis; sucrose metabolism. Enables the bacterium to metabolize sucrose as a sole carbon source. This is Sucrose-6-phosphate hydrolase (scrB) from Vibrio alginolyticus.